The primary structure comprises 397 residues: Glutamate 5-kinase (397 aa).

The disordered stretch occupies residues Met1–Val28. Lys40 contributes to the ATP binding site. Positions 80, 168, and 180 each coordinate substrate. Residues Ser200–Asp201 and Ser243–Lys249 each bind ATP. A PUA domain is found at His306–Glu383.

It belongs to the glutamate 5-kinase family.

The protein localises to the cytoplasm. The catalysed reaction is L-glutamate + ATP = L-glutamyl 5-phosphate + ADP. It participates in amino-acid biosynthesis; L-proline biosynthesis; L-glutamate 5-semialdehyde from L-glutamate: step 1/2. Catalyzes the transfer of a phosphate group to glutamate to form L-glutamate 5-phosphate. The chain is Glutamate 5-kinase from Zymomonas mobilis subsp. mobilis (strain ATCC 31821 / ZM4 / CP4).